The following is a 317-amino-acid chain: MSNEENIKSDNKSGDSSDLPTIPALDIGAEECDLLAELKNLTLKRPFDVKKLSPKVTKRVLFLKDIQVTHDELEEKFLAEKSALEATYDNLYKPLFAKRYEIVNGVVEAEAEKEGVPNFWLIAMKTNEMLANEITERDEAALKYLKDIRSCRVEDTSRNFKLEFLFDSNLYFKNSVLSKTYHVNDEDGPVLEKVIGTDIEWFPGKCLTHKVVVKKKTKKGPKKVNNIPMTKTENCESFFNFFKPPEIPEIDEVDDYDDFDTIMTEELQNLMDQDYDIAVTIRDKLIPHAVSWFTGEALVDEDDSDDNDDDDNDEKSD.

The Nuclear export signal signature appears at 52–67 (LSPKVTKRVLFLKDIQ). Residues 214–219 (KKKTKK) carry the Nuclear localization signal motif. Residues 297–317 (ALVDEDDSDDNDDDDNDEKSD) form a disordered region. Over residues 298-317 (LVDEDDSDDNDDDDNDEKSD) the composition is skewed to acidic residues.

Belongs to the nucleosome assembly protein (NAP) family. As to quaternary structure, can form homomeric and heteromeric protein complexes with NAP1;1, NAP1;2 and NAP1;3. Binds histone H2A. Expressed in the root segment covering the apical end of the differentiation zone, the elongation zone of the root and the mature pollen within the anthers of open flowers.

It is found in the nucleus. The protein resides in the cytoplasm. In terms of biological role, may modulate chromatin structure by regulation of nucleosome assembly/disassembly. The protein is Nucleosome assembly protein 1;4 (NAP1;4) of Arabidopsis thaliana (Mouse-ear cress).